The primary structure comprises 645 residues: ATP-dependent zinc metalloprotease FtsH (645 aa).

At 1-8 (MDFNREHK) the chain is on the cytoplasmic side. Residues 9–29 (INFLYVLAAMVGVLLIQSLVS) traverse the membrane as a helical segment. The Periplasmic portion of the chain corresponds to 30 to 105 (QPDHIRTIPY…FSGEPEPGPW (76 aa)). A helical membrane pass occupies residues 106–126 (PTILGWLMPIVGFALVWMFLI). Residues 127–645 (RPMSMGPGMD…ALTVEGGEAQ (519 aa)) lie on the Cytoplasmic side of the membrane. Residue 199 to 206 (GPPGTGKT) coordinates ATP. H423 lines the Zn(2+) pocket. The active site involves E424. Zn(2+)-binding residues include H427 and D500. The interval 612 to 645 (SASVLRDGGDGAADAGQDRSGEHRALTVEGGEAQ) is disordered. Positions 627-637 (GQDRSGEHRAL) are enriched in basic and acidic residues.

In the central section; belongs to the AAA ATPase family. The protein in the C-terminal section; belongs to the peptidase M41 family. In terms of assembly, homohexamer. The cofactor is Zn(2+).

The protein resides in the cell inner membrane. Its function is as follows. Acts as a processive, ATP-dependent zinc metallopeptidase for both cytoplasmic and membrane proteins. Plays a role in the quality control of integral membrane proteins. The polypeptide is ATP-dependent zinc metalloprotease FtsH (Paraburkholderia phymatum (strain DSM 17167 / CIP 108236 / LMG 21445 / STM815) (Burkholderia phymatum)).